The sequence spans 360 residues: Phospho-N-acetylmuramoyl-pentapeptide-transferase (360 aa).

Transmembrane regions (helical) follow at residues 27–47 (IVSL…MIAW), 73–93 (TMGG…WANL), 94–114 (SNPY…VGFV), 132–152 (WKYF…YAIG), 168–188 (VMPQ…VGTS), 199–219 (GLAI…AWAT), 236–256 (ASEL…FLWF), 263–283 (VFMG…IAVL), 288–308 (FLLV…ILQV), and 338–358 (VIVR…ATLK).

This sequence belongs to the glycosyltransferase 4 family. MraY subfamily. The cofactor is Mg(2+).

Its subcellular location is the cell inner membrane. It carries out the reaction UDP-N-acetyl-alpha-D-muramoyl-L-alanyl-gamma-D-glutamyl-meso-2,6-diaminopimeloyl-D-alanyl-D-alanine + di-trans,octa-cis-undecaprenyl phosphate = di-trans,octa-cis-undecaprenyl diphospho-N-acetyl-alpha-D-muramoyl-L-alanyl-D-glutamyl-meso-2,6-diaminopimeloyl-D-alanyl-D-alanine + UMP. It functions in the pathway cell wall biogenesis; peptidoglycan biosynthesis. Its function is as follows. Catalyzes the initial step of the lipid cycle reactions in the biosynthesis of the cell wall peptidoglycan: transfers peptidoglycan precursor phospho-MurNAc-pentapeptide from UDP-MurNAc-pentapeptide onto the lipid carrier undecaprenyl phosphate, yielding undecaprenyl-pyrophosphoryl-MurNAc-pentapeptide, known as lipid I. This Pectobacterium carotovorum subsp. carotovorum (strain PC1) protein is Phospho-N-acetylmuramoyl-pentapeptide-transferase.